The primary structure comprises 474 residues: Phosphatidylserine synthase 2 (474 aa).

At 1–62 (MLRSDVRRVA…DDGTNTFFWR (62 aa)) the chain is on the lumenal side. The chain crosses the membrane as a helical span at residues 63-83 (AHTLTVLFILTCSLGYVTLLE). At 84–96 (ETPQDTAYNAKRG) the chain is on the cytoplasmic side. Residues 97–117 (IIASILVFLCFGVTQAKDGPF) traverse the membrane as a helical segment. Residues 118-126 (SRPHPAYWR) lie on the Lumenal side of the membrane. The helical transmembrane segment at 127 to 147 (FWLCVSVVYELFLIFILFQTV) threads the bilayer. The Cytoplasmic segment spans residues 148–313 (HDGRQFMKFI…EWKPASSLRR (166 aa)). A helical transmembrane segment spans residues 314-334 (WLAVCGIIFVFLLAELNTFYL). A topological domain (lumenal) is located at residue K335. Residues 336 to 356 (FVLWMPPEHYLVLLRLVFFVN) traverse the membrane as a helical segment. Residues 357 to 376 (VGGVAMREIYDFMDDLKFHK) lie on the Cytoplasmic side of the membrane. Residues 377 to 397 (KLGQQAWMVAAITVTEFLIVV) form a helical membrane-spanning segment. Over 398–403 (KYDPYT) the chain is Lumenal. Residues 404–424 (ITLPLPFYVTQCWILGIVLVL) form a helical membrane-spanning segment. Topologically, residues 425 to 474 (TWTVWRFFIRDITLRYKEIRQQKQHRNEEEKSHRNGDVNSEKDTNKHKKH) are cytoplasmic. Residues 448–468 (QHRNEEEKSHRNGDVNSEKDT) show a composition bias toward basic and acidic residues. The disordered stretch occupies residues 448–474 (QHRNEEEKSHRNGDVNSEKDTNKHKKH).

Belongs to the phosphatidyl serine synthase family.

The protein localises to the endoplasmic reticulum membrane. It carries out the reaction a 1,2-diacyl-sn-glycero-3-phosphoethanolamine + L-serine = a 1,2-diacyl-sn-glycero-3-phospho-L-serine + ethanolamine. The catalysed reaction is 1-hexadecanoyl-2-(9Z-octadecenoyl)-sn-glycero-3-phosphoethanolamine + L-serine = 1-hexadecanoyl-2-(9Z-octadecenoyl)-sn-glycero-3-phospho-L-serine + ethanolamine. The enzyme catalyses 1-hexadecanoyl-2-(4Z,7Z,10Z,13Z,16Z,19Z-docosahexaenoyl)-sn-glycero-3-phosphoethanolamine + L-serine = 1-hexadecanoyl-2-(4Z,7Z,10Z,13Z,16Z,19Z-docosahexaenoyl)-sn-glycero-3-phosphoserine + ethanolamine. It catalyses the reaction 1-octadecanoyl-2-(5Z,8Z,11Z,14Z)-eicosatetraenoyl-sn-glycero-3-phosphoethanolamine + L-serine = 1-octadecanoyl-2-(5Z,8Z,11Z,14Z)-eicosatetraenoyl-sn-glycero-3-phosphoserine + ethanolamine. It carries out the reaction 1-octadecanoyl-2-(4Z,7Z,10Z,13Z,16Z,19Z-docosahexaenoyl)-sn-glycero-3-phosphoethanolamine + L-serine = 1-octadecanoyl-2-(4Z,7Z,10Z,13Z,16Z,19Z-docosahexaenoyl)-sn-glycero-3-phosphoserine + ethanolamine. The catalysed reaction is 1-(1Z-octadecenyl)-2-(4Z,7Z,10Z,13Z,16Z,19Z-docosahexaenoyl)-sn-glycero-3-phosphoethanolamine + L-serine = 1-(1Z-octadecenyl)-2-(4Z,7Z,10Z,13Z,16Z,19Z-docosahexaenoyl)-sn-glycero-3-phospho-L-serine + ethanolamine. The enzyme catalyses 1-octadecanoyl-2-(9Z-octadecenoyl)-sn-glycero-3-phosphoethanolamine + L-serine = 1-octadecanoyl-2-(9Z-octadecenoyl)-sn-glycero-3-phospho-L-serine + ethanolamine. It catalyses the reaction 1-(1Z-octadecenyl)-2-(9Z-octadecenoyl)-sn-glycero-3-phosphoethanolamine + L-serine = 1-(1Z-octadecenyl)-2-(9Z-octadecenoyl)-sn-glycero-3-phospho-L-serine + ethanolamine. It carries out the reaction 1-(1Z-octadecenyl)-2-(5Z,8Z,11Z,14Z- eicosatetraenoyl)-sn-glycero-3-phosphoethanolamine + L-serine = 1-(1Z-octadecenyl)-2-(5Z,8Z,11Z,14Z-eicosatetraenoyl)-sn-glycero-3-phospho-L-serine + ethanolamine. It participates in phospholipid metabolism; phosphatidylserine biosynthesis. Functionally, catalyzes a base-exchange reaction in which the polar head group of phosphatidylethanolamine (PE) or phosphatidylcholine (PC) is replaced by L-serine. Catalyzes the conversion of phosphatatidylethanolamine and does not act on phosphatidylcholine. Can utilize both phosphatidylethanolamine (PE) plasmalogen and diacyl PE as substrate and the latter is six times better utilized, indicating the importance of an ester linkage at the sn-1 position. Although it shows no sn-1 fatty acyl preference, exhibits significant preference towards docosahexaenoic acid (22:6n-3) compared with 18:1 or 20:4 at the sn-2 position. The polypeptide is Phosphatidylserine synthase 2 (ptdss2) (Xenopus tropicalis (Western clawed frog)).